The chain runs to 475 residues: Ribulose bisphosphate carboxylase large chain (475 aa).

The propeptide occupies 1 to 2; it reads MS. The residue at position 3 (Pro3) is an N-acetylproline. N6,N6,N6-trimethyllysine is present on Lys14. Asn123 and Thr173 together coordinate substrate. Lys175 serves as the catalytic Proton acceptor. Substrate is bound at residue Lys177. Mg(2+) is bound by residues Lys201, Asp203, and Glu204. Lys201 bears the N6-carboxylysine mark. His294 serves as the catalytic Proton acceptor. Residues Arg295, His327, and Ser379 each coordinate substrate.

Belongs to the RuBisCO large chain family. Type I subfamily. Heterohexadecamer of 8 large chains and 8 small chains; disulfide-linked. The disulfide link is formed within the large subunit homodimers. It depends on Mg(2+) as a cofactor. The disulfide bond which can form in the large chain dimeric partners within the hexadecamer appears to be associated with oxidative stress and protein turnover.

It localises to the plastid. Its subcellular location is the chloroplast. The enzyme catalyses 2 (2R)-3-phosphoglycerate + 2 H(+) = D-ribulose 1,5-bisphosphate + CO2 + H2O. It carries out the reaction D-ribulose 1,5-bisphosphate + O2 = 2-phosphoglycolate + (2R)-3-phosphoglycerate + 2 H(+). RuBisCO catalyzes two reactions: the carboxylation of D-ribulose 1,5-bisphosphate, the primary event in carbon dioxide fixation, as well as the oxidative fragmentation of the pentose substrate in the photorespiration process. Both reactions occur simultaneously and in competition at the same active site. In Chara vulgaris (Common stonewort), this protein is Ribulose bisphosphate carboxylase large chain.